The primary structure comprises 218 residues: DNA-directed RNA polymerases IV and V subunit 5B (218 aa).

Belongs to the archaeal Rpo5/eukaryotic RPB5 RNA polymerase subunit family. Component of the RNA polymerase IV and V complexes. Interacts with NRPD1. Expressed inleaves, flower buds, flowers and siliques.

The protein resides in the nucleus. Its function is as follows. DNA-dependent RNA polymerase catalyzes the transcription of DNA into RNA using the four ribonucleoside triphosphates as substrates. Component of RNA polymerases IV and V which mediate short-interfering RNAs (siRNA) accumulation and subsequent RNA-directed DNA methylation-dependent (RdDM) transcriptional gene silencing (TGS) of endogenous repeated sequences, including transposable elements. The polypeptide is DNA-directed RNA polymerases IV and V subunit 5B (NRPD5B) (Arabidopsis thaliana (Mouse-ear cress)).